The sequence spans 121 residues: Ribonuclease P protein component (121 aa).

This sequence belongs to the RnpA family. Consists of a catalytic RNA component (M1 or rnpB) and a protein subunit.

The catalysed reaction is Endonucleolytic cleavage of RNA, removing 5'-extranucleotides from tRNA precursor.. In terms of biological role, RNaseP catalyzes the removal of the 5'-leader sequence from pre-tRNA to produce the mature 5'-terminus. It can also cleave other RNA substrates such as 4.5S RNA. The protein component plays an auxiliary but essential role in vivo by binding to the 5'-leader sequence and broadening the substrate specificity of the ribozyme. The polypeptide is Ribonuclease P protein component (Nitrosomonas eutropha (strain DSM 101675 / C91 / Nm57)).